A 156-amino-acid polypeptide reads, in one-letter code: ATP synthase subunit b (156 aa).

Residues 7-27 (LIGQTVAFIIFVWFCMKFVWP) traverse the membrane as a helical segment.

Belongs to the ATPase B chain family. In terms of assembly, F-type ATPases have 2 components, F(1) - the catalytic core - and F(0) - the membrane proton channel. F(1) has five subunits: alpha(3), beta(3), gamma(1), delta(1), epsilon(1). F(0) has three main subunits: a(1), b(2) and c(10-14). The alpha and beta chains form an alternating ring which encloses part of the gamma chain. F(1) is attached to F(0) by a central stalk formed by the gamma and epsilon chains, while a peripheral stalk is formed by the delta and b chains.

Its subcellular location is the cell inner membrane. F(1)F(0) ATP synthase produces ATP from ADP in the presence of a proton or sodium gradient. F-type ATPases consist of two structural domains, F(1) containing the extramembraneous catalytic core and F(0) containing the membrane proton channel, linked together by a central stalk and a peripheral stalk. During catalysis, ATP synthesis in the catalytic domain of F(1) is coupled via a rotary mechanism of the central stalk subunits to proton translocation. Its function is as follows. Component of the F(0) channel, it forms part of the peripheral stalk, linking F(1) to F(0). The protein is ATP synthase subunit b of Shewanella oneidensis (strain ATCC 700550 / JCM 31522 / CIP 106686 / LMG 19005 / NCIMB 14063 / MR-1).